The sequence spans 250 residues: MSDASSTILFEYPLNEKTRTWLRIESLSQQLHQNHSLTDMGSALTFFRAIAELLDVLERGDVRTELLKELERQQQKLLQWSDVPGVDMERIHSLRRQLKDLSSTLMAAPRMGQFLREDRLIGMVRQRLGIPGGCCSFDLPTLHSWLHQPKELREQLVFSWLNSLSPLKQALDMILELIRHSGTFRPQTSLNGFFQDNASDADLLRLRLEQMHQLYPQISGHKTRYAIRFLPLDSENGHIPPRLTFELACC.

Belongs to the ZapD family. As to quaternary structure, interacts with FtsZ.

The protein localises to the cytoplasm. Cell division factor that enhances FtsZ-ring assembly. Directly interacts with FtsZ and promotes bundling of FtsZ protofilaments, with a reduction in FtsZ GTPase activity. The protein is Cell division protein ZapD of Pectobacterium atrosepticum (strain SCRI 1043 / ATCC BAA-672) (Erwinia carotovora subsp. atroseptica).